Here is a 76-residue protein sequence, read N- to C-terminus: Large ribosomal subunit protein bL28 (76 aa).

The disordered stretch occupies residues 21 to 42 (RGKAKKEGGVGKHITKTSRRRQ). Basic residues predominate over residues 33-42 (HITKTSRRRQ).

The protein belongs to the bacterial ribosomal protein bL28 family.

This Halothermothrix orenii (strain H 168 / OCM 544 / DSM 9562) protein is Large ribosomal subunit protein bL28.